The chain runs to 85 residues: Small ribosomal subunit protein bS18 (85 aa).

The protein belongs to the bacterial ribosomal protein bS18 family. As to quaternary structure, part of the 30S ribosomal subunit. Forms a tight heterodimer with protein bS6.

Binds as a heterodimer with protein bS6 to the central domain of the 16S rRNA, where it helps stabilize the platform of the 30S subunit. The sequence is that of Small ribosomal subunit protein bS18 from Helicobacter pylori (strain P12).